We begin with the raw amino-acid sequence, 426 residues long: Serine--tRNA ligase (426 aa).

235–237 provides a ligand contact to L-serine; it reads TAE. ATP-binding positions include 266–268 and Val-282; that span reads RRE. Glu-289 contacts L-serine. 353–356 contacts ATP; the sequence is EASS. Ser-389 is an L-serine binding site.

Belongs to the class-II aminoacyl-tRNA synthetase family. Type-1 seryl-tRNA synthetase subfamily. In terms of assembly, homodimer. The tRNA molecule binds across the dimer.

The protein resides in the cytoplasm. It catalyses the reaction tRNA(Ser) + L-serine + ATP = L-seryl-tRNA(Ser) + AMP + diphosphate + H(+). It carries out the reaction tRNA(Sec) + L-serine + ATP = L-seryl-tRNA(Sec) + AMP + diphosphate + H(+). It participates in aminoacyl-tRNA biosynthesis; selenocysteinyl-tRNA(Sec) biosynthesis; L-seryl-tRNA(Sec) from L-serine and tRNA(Sec): step 1/1. Functionally, catalyzes the attachment of serine to tRNA(Ser). Is also able to aminoacylate tRNA(Sec) with serine, to form the misacylated tRNA L-seryl-tRNA(Sec), which will be further converted into selenocysteinyl-tRNA(Sec). This Chlorobium chlorochromatii (strain CaD3) protein is Serine--tRNA ligase.